We begin with the raw amino-acid sequence, 329 residues long: Ubiquinol oxidase 1c, mitochondrial (329 aa).

A mitochondrion-targeting transit peptide spans 1-45 (MITTLLRRSLLDASKQATSINGILFHQLAPAKYFRVPAVGGLRDF). A helical membrane pass occupies residues 154–174 (AIMLETVAAVPGMVGGMLMHF). Residues Glu-158, Glu-197, and His-200 each contribute to the Fe cation site. Residues 216–236 (ALVISVQGVFFNAYLIGYIIS) form a helical membrane-spanning segment. Positions 248, 299, and 302 each coordinate Fe cation.

This sequence belongs to the alternative oxidase family. As to quaternary structure, homodimer; disulfide-linked. It depends on Fe cation as a cofactor. Expressed in roots, stems, leaves, cotyledons and flowers. High expression in stamens.

The protein localises to the mitochondrion inner membrane. It carries out the reaction 2 a ubiquinol + O2 = 2 a ubiquinone + 2 H2O. Functionally, catalyzes the cyanide-resistant oxidation of ubiquinol and the reduction of molecular oxygen to water, but does not translocate protons and consequently is not linked to oxidative phosphorylation. May increase respiration when the cytochrome respiratory pathway is restricted, or in response to low temperatures. The protein is Ubiquinol oxidase 1c, mitochondrial (AOX1C) of Arabidopsis thaliana (Mouse-ear cress).